Here is a 132-residue protein sequence, read N- to C-terminus: Agouti-signaling protein (132 aa).

A signal peptide spans 1–22; the sequence is MDVTRLLLATLLVFLCFFTACS. N-linked (GlcNAc...) asparagine glycosylation is present at Asn-39. Residues 61–87 are disordered; sequence QISRKEAEKKRSSKKEASMKKVARPRT. Positions 63–79 are enriched in basic and acidic residues; the sequence is SRKEAEKKRSSKKEASM. Intrachain disulfides connect Cys-93/Cys-108, Cys-100/Cys-114, Cys-107/Cys-125, Cys-111/Cys-132, and Cys-116/Cys-123. Positions 93–132 constitute an Agouti domain; the sequence is CVATRDSCKPPAPACCDPCASCQCRFFRSACSCRVLSLNC.

Its subcellular location is the secreted. In terms of biological role, involved in the regulation of melanogenesis. The binding of ASP to MC1R precludes alpha-MSH initiated signaling and thus blocks production of cAMP, leading to a down-regulation of eumelanogenesis (brown/black pigment) and thus increasing synthesis of pheomelanin (yellow/red pigment). In Macaca nigrescens (Gorontalo macaque), this protein is Agouti-signaling protein (ASIP).